Here is a 171-residue protein sequence, read N- to C-terminus: Putative phosphoesterase ABC1741 (171 aa).

Histidine 34 serves as the catalytic Proton donor. Short sequence motifs (HXTX) lie at residues histidine 34 to leucine 37 and histidine 116 to isoleucine 119. Catalysis depends on histidine 116, which acts as the Proton acceptor.

The protein belongs to the 2H phosphoesterase superfamily. YjcG family.

This is Putative phosphoesterase ABC1741 from Shouchella clausii (strain KSM-K16) (Alkalihalobacillus clausii).